The primary structure comprises 931 residues: G patch domain-containing protein 1 (931 aa).

Disordered stretches follow at residues 1 to 41 (MAAR…TVRD), 73 to 92 (PSTFVSSRQNRADKSVLGPE), and 169 to 209 (QGVG…EDDD). An N-acetylalanine modification is found at alanine 2. Phosphoserine is present on residues serine 6 and serine 8. The 47-residue stretch at 152–198 (KLSVGFELLRKMGWKEGQGVGPRVKRRPRRQKPDPGVKIYGCALPPG) folds into the G-patch domain. Lysine 312 is covalently cross-linked (Glycyl lysine isopeptide (Lys-Gly) (interchain with G-Cter in SUMO2)). A phosphoserine mark is found at serine 357 and serine 477. Disordered stretches follow at residues 568–595 (RFTHAKEEDDSDQVEVPRDQENDVGDKQ) and 659–931 (LPTT…LRRQ). Residues 582–593 (EVPRDQENDVGD) are compositionally biased toward basic and acidic residues. The span at 659-668 (LPTTQASSEK) shows a compositional bias: polar residues. Residues 669–695 (VSQHRGPDKSRKPSRWDTSKHEKKEDS) show a composition bias toward basic and acidic residues. A Phosphoserine modification is found at serine 715. The span at 769–780 (SEDEQGDSEDDQ) shows a compositional bias: acidic residues. Residues 786–802 (ANFQSSQDTDLGETSSV) show a composition bias toward polar residues. The segment covering 852–888 (EKHKKNKDKHKAKKEHRRKKEKKKKHRKHKHKGKQKN) has biased composition (basic residues). Residues 896–905 (SSESSDSSDS) are compositionally biased toward low complexity. Residues 922 to 931 (RLKSLPLRRQ) show a composition bias toward basic residues.

The protein belongs to the GPATCH1 family.

The sequence is that of G patch domain-containing protein 1 (GPATCH1) from Homo sapiens (Human).